The primary structure comprises 294 residues: ATP phosphoribosyltransferase (294 aa).

The protein belongs to the ATP phosphoribosyltransferase family. Long subfamily. Mg(2+) serves as cofactor.

The protein localises to the cytoplasm. It carries out the reaction 1-(5-phospho-beta-D-ribosyl)-ATP + diphosphate = 5-phospho-alpha-D-ribose 1-diphosphate + ATP. The protein operates within amino-acid biosynthesis; L-histidine biosynthesis; L-histidine from 5-phospho-alpha-D-ribose 1-diphosphate: step 1/9. Feedback inhibited by histidine. Catalyzes the condensation of ATP and 5-phosphoribose 1-diphosphate to form N'-(5'-phosphoribosyl)-ATP (PR-ATP). Has a crucial role in the pathway because the rate of histidine biosynthesis seems to be controlled primarily by regulation of HisG enzymatic activity. The chain is ATP phosphoribosyltransferase from Chlorobium chlorochromatii (strain CaD3).